Consider the following 460-residue polypeptide: Bifunctional protein GlmU (460 aa).

The pyrophosphorylase stretch occupies residues 1-229 (MTNYAIILAA…FNESLGVNDR (229 aa)). Residues 8–11 (LAAG), Lys-22, Gln-72, and 77–78 (GT) contribute to the UDP-N-acetyl-alpha-D-glucosamine site. Asp-102 provides a ligand contact to Mg(2+). UDP-N-acetyl-alpha-D-glucosamine-binding residues include Gly-139, Glu-154, Asn-169, and Asn-227. Asn-227 provides a ligand contact to Mg(2+). A linker region spans residues 230 to 250 (VALATAETVMRQRITQKHMVN). The tract at residues 251–460 (GVTFQNPETV…RLAHHPSRSK (210 aa)) is N-acetyltransferase. Positions 332 and 350 each coordinate UDP-N-acetyl-alpha-D-glucosamine. Residue His-362 is the Proton acceptor of the active site. Positions 365 and 376 each coordinate UDP-N-acetyl-alpha-D-glucosamine. Residues Ala-379, 385 to 386 (NY), Ser-404, Ala-422, and Arg-439 contribute to the acetyl-CoA site.

This sequence in the N-terminal section; belongs to the N-acetylglucosamine-1-phosphate uridyltransferase family. In the C-terminal section; belongs to the transferase hexapeptide repeat family. In terms of assembly, homotrimer. Requires Mg(2+) as cofactor.

Its subcellular location is the cytoplasm. The catalysed reaction is alpha-D-glucosamine 1-phosphate + acetyl-CoA = N-acetyl-alpha-D-glucosamine 1-phosphate + CoA + H(+). It carries out the reaction N-acetyl-alpha-D-glucosamine 1-phosphate + UTP + H(+) = UDP-N-acetyl-alpha-D-glucosamine + diphosphate. Its pathway is nucleotide-sugar biosynthesis; UDP-N-acetyl-alpha-D-glucosamine biosynthesis; N-acetyl-alpha-D-glucosamine 1-phosphate from alpha-D-glucosamine 6-phosphate (route II): step 2/2. It participates in nucleotide-sugar biosynthesis; UDP-N-acetyl-alpha-D-glucosamine biosynthesis; UDP-N-acetyl-alpha-D-glucosamine from N-acetyl-alpha-D-glucosamine 1-phosphate: step 1/1. It functions in the pathway bacterial outer membrane biogenesis; LPS lipid A biosynthesis. In terms of biological role, catalyzes the last two sequential reactions in the de novo biosynthetic pathway for UDP-N-acetylglucosamine (UDP-GlcNAc). The C-terminal domain catalyzes the transfer of acetyl group from acetyl coenzyme A to glucosamine-1-phosphate (GlcN-1-P) to produce N-acetylglucosamine-1-phosphate (GlcNAc-1-P), which is converted into UDP-GlcNAc by the transfer of uridine 5-monophosphate (from uridine 5-triphosphate), a reaction catalyzed by the N-terminal domain. The polypeptide is Bifunctional protein GlmU (Streptococcus pyogenes serotype M12 (strain MGAS9429)).